The sequence spans 1147 residues: Disease resistance protein RPP4 (1147 aa).

In terms of domain architecture, TIR spans Arg11–Leu175. Glu86 is an active-site residue. The region spanning Glu189–Asn446 is the NB-ARC domain. 18 LRR repeats span residues Met548 to Lys573, Pro584 to Ala606, Tyr608 to Leu629, Gly630 to Ile653, Leu655 to Ala676, Met698 to Pro721, Arg722 to Ala743, Glu744 to Leu766, Gly767 to Ile790, Leu792 to Ala813, Thr814 to Leu836, Glu837 to Cys860, Leu926 to Thr950, Leu952 to Leu973, His974 to Leu996, Ser997 to Ser1017, Thr1018 to Arg1042, and Ser1044 to Leu1064.

As to quaternary structure, interacts with RSH1.

The enzyme catalyses NAD(+) + H2O = ADP-D-ribose + nicotinamide + H(+). Its function is as follows. TIR-NB-LRR receptor-like protein that confers resistance to the pathogen Hyaloperonospora arabidopsis isolates Emoy2 and Emwa1 (downy mildew disease). Plays a role in the regulation of temperature response during plant growth and survival. The polypeptide is Disease resistance protein RPP4 (Arabidopsis thaliana (Mouse-ear cress)).